Reading from the N-terminus, the 225-residue chain is Plasma membrane-associated cation-binding protein 1 (225 aa).

G2 carries N-myristoyl glycine lipidation. T32 bears the Phosphothreonine mark. Position 107 is a phosphoserine (S107). Positions 140 to 197 (PVEEVKAEEPAKTEEPAKTEGTSGEKEEIVEETKKGETPETAVVEEKKPEVEEKKEEA) are enriched in basic and acidic residues. A disordered region spans residues 140–225 (PVEEVKAEEP…TAPVAEPPKP (86 aa)). Residues T152 and T177 each carry the phosphothreonine modification.

The protein belongs to the DREPP family. As to quaternary structure, interacts with Turnip mosaic virus (TuMV) P3N-PIPO. Cu(2+) is required as a cofactor. In terms of tissue distribution, mostly expressed in the basal region of hypocotyls. Expressed in seedlings, roots, shoots, stems, leaves (e.g. in epidermis and vascular tissues), flowers (e.g. in pistils and anthers) and siliques (at protein level).

It is found in the cell membrane. Its subcellular location is the cytoplasm. The protein localises to the cytoskeleton. The protein resides in the cell junction. It localises to the plasmodesma. May be involved in intracellular signaling through interaction with PtdInsPs and calmodulin (CaM); may keep PtdInsPs attached to the plasma membrane until Ca(2+)-CaM reaches a competitive concentration subsequent to an increase triggered by a stimulus, thus leading to PtdInsPs release and subsequent activation of InsPs-dependent signaling cascade. Interacts competitively at the N-terminus with calcium ions and CaM (in a calcium-dependent manner), and with the phosphatidylinositol phosphates PtdIns(3,4,5)P(3), PtdIns(3,4)P(2), PtdIns(4,5)P(2) and PtdIns(3,5)P(2). Also binds weakly to PtdIns(3)P, PtdIns(4)P and PtdIns(5)P. Negative regulator of hypocotyl cell elongation by destabilizing cortical microtubules in a calcium-dependent manner. Binds directly to and destabilized microtubules to enhance microtubule depolymerization when cytoplasmic calcium increases. In case of Turnip mosaic virus (TuMV) infection, confers sensitivity by promoting viral cell-to-cell movement through interaction with viral P3N-PIPO. This chain is Plasma membrane-associated cation-binding protein 1 (PCAP1), found in Arabidopsis thaliana (Mouse-ear cress).